A 305-amino-acid polypeptide reads, in one-letter code: Small ribosomal subunit biogenesis GTPase RsgA (305 aa).

One can recognise a CP-type G domain in the interval Ser67–Phe224. GTP is bound by residues Asn116–Asp119 and Gly166–Thr174. Zn(2+) contacts are provided by Cys248, Cys253, His255, and Cys261.

This sequence belongs to the TRAFAC class YlqF/YawG GTPase family. RsgA subfamily. Monomer. Associates with 30S ribosomal subunit, binds 16S rRNA. It depends on Zn(2+) as a cofactor.

Its subcellular location is the cytoplasm. In terms of biological role, one of several proteins that assist in the late maturation steps of the functional core of the 30S ribosomal subunit. Helps release RbfA from mature subunits. May play a role in the assembly of ribosomal proteins into the subunit. Circularly permuted GTPase that catalyzes slow GTP hydrolysis, GTPase activity is stimulated by the 30S ribosomal subunit. The sequence is that of Small ribosomal subunit biogenesis GTPase RsgA from Ruminiclostridium cellulolyticum (strain ATCC 35319 / DSM 5812 / JCM 6584 / H10) (Clostridium cellulolyticum).